Here is a 188-residue protein sequence, read N- to C-terminus: MRVMGVDPGLTRCGLSVVENGRGSQVVALDVDVVRTPSDAPVSKRLLAVSDVVEHWLDAHHPDVMAIERVFSQQNVSTVMGTAQAGGVIALAAARRGIDVHFHTPSEVKAAVTGNGAANKAQVTAMVTRILALQAKPTPADAADALALAICHCWRAPMIARMAEAEALGARHRQAYRAKVAGEVKATR.

Residues Asp7, Glu68, and Asp141 contribute to the active site. 3 residues coordinate Mg(2+): Asp7, Glu68, and Asp141.

This sequence belongs to the RuvC family. In terms of assembly, homodimer which binds Holliday junction (HJ) DNA. The HJ becomes 2-fold symmetrical on binding to RuvC with unstacked arms; it has a different conformation from HJ DNA in complex with RuvA. In the full resolvosome a probable DNA-RuvA(4)-RuvB(12)-RuvC(2) complex forms which resolves the HJ. Mg(2+) is required as a cofactor.

The protein localises to the cytoplasm. The enzyme catalyses Endonucleolytic cleavage at a junction such as a reciprocal single-stranded crossover between two homologous DNA duplexes (Holliday junction).. In terms of biological role, the RuvA-RuvB-RuvC complex processes Holliday junction (HJ) DNA during genetic recombination and DNA repair. Endonuclease that resolves HJ intermediates. Cleaves cruciform DNA by making single-stranded nicks across the HJ at symmetrical positions within the homologous arms, yielding a 5'-phosphate and a 3'-hydroxyl group; requires a central core of homology in the junction. The consensus cleavage sequence is 5'-(A/T)TT(C/G)-3'. Cleavage occurs on the 3'-side of the TT dinucleotide at the point of strand exchange. HJ branch migration catalyzed by RuvA-RuvB allows RuvC to scan DNA until it finds its consensus sequence, where it cleaves and resolves the cruciform DNA. The polypeptide is Crossover junction endodeoxyribonuclease RuvC (Mycobacterium leprae (strain TN)).